A 651-amino-acid polypeptide reads, in one-letter code: MASATLGSSSSSASPAVAELCQNTPETFLEASKLLLTYADNILRNPSDEKYRSIRIGNTAFSTRLLPVRGAVECLFEMGFEEGETHLIFPKKASVEQLQKIRDLIAVERRSRLDGSSQKVEFSQHPAAVRLPAEQPEDPTGLMQHSGNQPGQPLSLPSAPLVVGDSTIFKVLQSNIQHVQLYENPVLQEKALACIPVNELKRKSQEKLFRARKLDKGTKVSDEDFLLLELLHWFKEEFFHWVNNVVCSRCGRETRSRDEALPPNDDELKWGAKNVEDHYCDACQLSNRFPRYNNPEKLLETRCGRCGEWANCFTLCCRALGFEARYVWDYTDHVWTEVYSPSQQRWLHCDACEDVCDKPLLYEIGWGKKLSYIIAFSKDEVVDVTWRYSCKHEEVMSRRTKVKEELLRETINGLNKQRQLLLSESRRKELLQRIIVELVEFISPKTPRPGELGGRVSGSLAWRVARGETCLERKEILFIPSENEKISKQFHLRYDIVRDRYIRVSDNNANISGWENGVWKMESIFRKVEKDWNMVYLARKEGSSFAYISWKFECGSAGLKVDNVSIRTSSQSFETGSVRWKLRSEMAQVNLLGDRNLRSYDDFCGATEVTLEAELSRGDGDVAWQHTQLFRQSLNDHAENGLEIIITFSDL.

Ala-2 is modified (N-acetylalanine). The region spanning 30–91 is the PUB domain; that stretch reads EASKLLLTYA…EGETHLIFPK (62 aa). A disordered region spans residues 116–153; that stretch reads SSQKVEFSQHPAAVRLPAEQPEDPTGLMQHSGNQPGQP. Over residues 143 to 152 the composition is skewed to polar residues; sequence MQHSGNQPGQ. Zn(2+) contacts are provided by Cys-247, Cys-250, Cys-280, and Cys-283. The active-site Nucleophile is Cys-306. Active-site residues include His-333 and Asp-350. The 201-residue stretch at 451–651 folds into the PAW domain; it reads ELGGRVSGSL…LEIIITFSDL (201 aa).

It belongs to the transglutaminase-like superfamily. PNGase family. Component of a complex required to couple retrotranslocation, ubiquitination and deglycosylation composed of NGLY1, SAKS1, AMFR, VCP and RAD23B. Interacts with the proteasome components RAD23B and PSMC1. Interacts with directly with VCP. Interacts with DERL1, bringing it close to the endoplasmic reticulum membrane. Interacts with SAKS1. It depends on Zn(2+) as a cofactor.

The protein localises to the cytoplasm. The enzyme catalyses Hydrolysis of an N(4)-(acetyl-beta-D-glucosaminyl)asparagine residue in which the glucosamine residue may be further glycosylated, to yield a (substituted) N-acetyl-beta-D-glucosaminylamine and a peptide containing an aspartate residue.. With respect to regulation, inhibited by Z-VAD-fmk, a well-known caspase inhibitor, which inhibits enzyme activity through covalent binding of the carbohydrate to the single Cys-306 residue. Functionally, specifically deglycosylates the denatured form of N-linked glycoproteins in the cytoplasm and assists their proteasome-mediated degradation. Cleaves the beta-aspartyl-glucosamine (GlcNAc) of the glycan and the amide side chain of Asn, converting Asn to Asp. Prefers proteins containing high-mannose over those bearing complex type oligosaccharides. Can recognize misfolded proteins in the endoplasmic reticulum that are exported to the cytosol to be destroyed and deglycosylate them, while it has no activity toward native proteins. Deglycosylation is a prerequisite for subsequent proteasome-mediated degradation of some, but not all, misfolded glycoproteins. The chain is Peptide-N(4)-(N-acetyl-beta-glucosaminyl)asparagine amidase (Ngly1) from Rattus norvegicus (Rat).